A 639-amino-acid chain; its full sequence is Developmental regulatory protein wetA (639 aa).

4 disordered regions span residues 65–97, 206–369, 418–552, and 587–613; these read MDPS…EFDF, TTMR…SAAS, GLLI…SADE, and LMTG…RRRR. Positions 69-78 are enriched in basic residues; it reads HHHHHPHHHA. Polar residues-rich tracts occupy residues 81-90 and 214-226; these read ESSTTSSGVS and VSQT…SPSM. A compositionally biased stretch (basic residues) spans 246–255; the sequence is RGRRAHRAHT. 3 stretches are compositionally biased toward low complexity: residues 256–275, 346–369, and 506–526; these read QHAL…QAHQ, QQQW…SAAS, and HSSG…RVSV.

Belongs to the wetA family.

BrlA, abaA and wetA are pivotal regulators of conidiophore development and conidium maturation. They act individually and together to regulate their own expression and that of numerous other sporulation-specific genes. Acts as a crucial regulator of both conidiation capacity and conidial quality. Plays a role in virulence. In Beauveria bassiana (strain ARSEF 2860) (White muscardine disease fungus), this protein is Developmental regulatory protein wetA.